The following is a 194-amino-acid chain: MPNWGGGAKCGACEKTVYHAEEIQCNGRSFHKTCFHCMACRKALDSTTVAAHESEIYCKVCYGRRYGPKGIGFGQGAGCLSTDTGEHLGLQFQQSPKPARAATTSNPSKFSAKFGESEKCPRCGKSVYAAEKVMGGGKPWHKTCFRCAICGKSLESTNVTDKDGELYCKVCYAKNFGPTGIGFGGLTQQVEKKE.

Positions 1 to 5 are interaction with TCAP; the sequence is MPNWG. Residues 10–61 enclose the LIM zinc-binding 1 domain; sequence CGACEKTVYHAEEIQCNGRSFHKTCFHCMACRKALDSTTVAAHESEIYCKVC. The short motif at 64–69 is the Nuclear localization signal element; the sequence is RRYGPK. The interval 94–105 is interaction with CLF2; that stretch reads QSPKPARAATTS. Phosphoserine occurs at positions 95, 111, and 153. Residues 120-171 enclose the LIM zinc-binding 2 domain; sequence CPRCGKSVYAAEKVMGGGKPWHKTCFRCAICGKSLESTNVTDKDGELYCKVC.

In terms of assembly, self-associates. Oligomeric in the cytoplasm and monomeric in the nucleus. Homooligomers preferentially form along the actin cytoskeleton. Interacts with TCAP. Interacts with LDHD, MYOD1, MYOG, ACTN2, NRAP, MYF6. Interacts (via N-terminus)D with GLRX3 (via C-terminus) and PPP3CA; GLRX3 and calcineurin compete for interaction with CSRP3. Interacts with CFL2; the stoichiometry influences F-actin depolymerization and possibly two molecules of CFL2 can interact with one molecule of CSRP3 resulting in the highest functional impact; the interaction is stronger with phosphorylated CFL2. In terms of processing, phosphorylated by PKC/PRKCA.

The protein localises to the nucleus. It is found in the cytoplasm. It localises to the cytoskeleton. Its subcellular location is the myofibril. The protein resides in the sarcomere. The protein localises to the z line. Functionally, positive regulator of myogenesis. Acts as a cofactor for myogenic bHLH transcription factors such as MYOD1, and probably MYOG and MYF6. Enhances the DNA-binding activity of the MYOD1:TCF3 isoform E47 complex and may promote formation of a functional MYOD1:TCF3 isoform E47:MEF2A complex involved in myogenesis. Plays a crucial and specific role in the organization of cytosolic structures in cardiomyocytes. Could play a role in mechanical stretch sensing. May be a scaffold protein that promotes the assembly of interacting proteins at Z-line structures. It is essential for calcineurin anchorage to the Z line. Required for stress-induced calcineurin-NFAT activation. The role in regulation of cytoskeleton dynamics by association with CFL2 is reported conflictingly. Proposed to contribute to the maintenance of muscle cell integrity through an actin-based mechanism. Can directly bind to actin filaments, cross-link actin filaments into bundles without polarity selectivity and protect them from dilution- and cofilin-mediated depolymerization; the function seems to involve its self-association. In vitro can inhibit PKC/PRKCA activity. Proposed to be involved in cardiac stress signaling by down-regulating excessive PKC/PRKCA signaling. This chain is Cysteine and glycine-rich protein 3 (Csrp3), found in Mus musculus (Mouse).